We begin with the raw amino-acid sequence, 286 residues long: Cysteine-rich repeat secretory protein 57 (286 aa).

Residues 1–20 (METTKKLSVLLCLFFTMNQA) form the signal peptide. Topologically, residues 21–265 (ISESDSDEHM…PSRSGSFSIR (245 aa)) are extracellular. Gnk2-homologous domains follow at residues 29 to 131 (HMAT…DKFF) and 137 to 247 (TKPN…TSNS). N-linked (GlcNAc...) asparagine glycosylation is found at Asn35, Asn40, Asn44, Asn60, Asn69, Asn90, Asn100, Asn108, Asn209, and Asn246. The chain crosses the membrane as a helical span at residues 266-284 (GNNKILVGMILAVSVFAFL). The Cytoplasmic portion of the chain corresponds to 285–286 (GL).

The protein belongs to the cysteine-rich repeat secretory protein family.

Its subcellular location is the membrane. The protein is Cysteine-rich repeat secretory protein 57 (CRRSP57) of Arabidopsis thaliana (Mouse-ear cress).